The primary structure comprises 175 residues: Cytochrome c homolog (175 aa).

Residues 1–8 (MTGKELNK) are Cytoplasmic-facing. A helical; Signal-anchor membrane pass occupies residues 9 to 29 (IVAAILFASLIAMIVGFIANI). Residues 30–175 (LYKPNLHVLH…LFLKNYVHDQ (146 aa)) lie on the Periplasmic side of the membrane. Heme c-binding residues include Cys-84, Cys-87, His-88, and Met-150.

The protein belongs to the cytochrome c family. Post-translationally, binds 1 heme c group covalently per subunit.

The protein localises to the cell membrane. May be involved in electron transfer from bc1 complex to aa3. The chain is Cytochrome c homolog (cycM) from Rickettsia prowazekii (strain Madrid E).